An 89-amino-acid chain; its full sequence is Cell division topological specificity factor (89 aa).

The protein belongs to the MinE family.

Its function is as follows. Prevents the cell division inhibition by proteins MinC and MinD at internal division sites while permitting inhibition at polar sites. This ensures cell division at the proper site by restricting the formation of a division septum at the midpoint of the long axis of the cell. This Janthinobacterium sp. (strain Marseille) (Minibacterium massiliensis) protein is Cell division topological specificity factor.